We begin with the raw amino-acid sequence, 103 residues long: Pyrimidine/purine nucleoside phosphorylase (103 aa).

This sequence belongs to the nucleoside phosphorylase PpnP family.

It catalyses the reaction a purine D-ribonucleoside + phosphate = a purine nucleobase + alpha-D-ribose 1-phosphate. The enzyme catalyses adenosine + phosphate = alpha-D-ribose 1-phosphate + adenine. The catalysed reaction is cytidine + phosphate = cytosine + alpha-D-ribose 1-phosphate. It carries out the reaction guanosine + phosphate = alpha-D-ribose 1-phosphate + guanine. It catalyses the reaction inosine + phosphate = alpha-D-ribose 1-phosphate + hypoxanthine. The enzyme catalyses thymidine + phosphate = 2-deoxy-alpha-D-ribose 1-phosphate + thymine. The catalysed reaction is uridine + phosphate = alpha-D-ribose 1-phosphate + uracil. It carries out the reaction xanthosine + phosphate = alpha-D-ribose 1-phosphate + xanthine. Its function is as follows. Catalyzes the phosphorolysis of diverse nucleosides, yielding D-ribose 1-phosphate and the respective free bases. Can use uridine, adenosine, guanosine, cytidine, thymidine, inosine and xanthosine as substrates. Also catalyzes the reverse reactions. This is Pyrimidine/purine nucleoside phosphorylase from Shewanella denitrificans (strain OS217 / ATCC BAA-1090 / DSM 15013).